The chain runs to 279 residues: 4-diphosphocytidyl-2-C-methyl-D-erythritol kinase (279 aa).

The active site involves K11. An ATP-binding site is contributed by 95–105 (PVAAGLGGGSS). Residue D137 is part of the active site.

Belongs to the GHMP kinase family. IspE subfamily.

It catalyses the reaction 4-CDP-2-C-methyl-D-erythritol + ATP = 4-CDP-2-C-methyl-D-erythritol 2-phosphate + ADP + H(+). It participates in isoprenoid biosynthesis; isopentenyl diphosphate biosynthesis via DXP pathway; isopentenyl diphosphate from 1-deoxy-D-xylulose 5-phosphate: step 3/6. Functionally, catalyzes the phosphorylation of the position 2 hydroxy group of 4-diphosphocytidyl-2C-methyl-D-erythritol. This Geobacter sulfurreducens (strain ATCC 51573 / DSM 12127 / PCA) protein is 4-diphosphocytidyl-2-C-methyl-D-erythritol kinase.